A 184-amino-acid chain; its full sequence is UPF0149 protein PSPA7_5968 (184 aa).

Belongs to the UPF0149 family.

The polypeptide is UPF0149 protein PSPA7_5968 (Pseudomonas paraeruginosa (strain DSM 24068 / PA7) (Pseudomonas aeruginosa (strain PA7))).